Consider the following 863-residue polypeptide: MIKGVVNKIFGTKNDREIKRYQKRVAKINALEPKYEKLTDEELKKAFNELRQKVKSGQMSMDEALEDSFAITREASKRVLGMRHYDVQLIGGMVLHEGKIAEMKTGEGKTLVATLAVALNAMTDEGVHVVTVNDYLAKRDATEMGKLYEFLGYSTGCITSEIQDDQERKKQYQCDITYGTNNEFGFDYLRDNMKYSLDEIVQRGHNFAIVDEVDSILIDEARTPLIISGPTNRKLDNYVKADQIAKQLEKDKHFTVDEKDRVILLTQEGIAKAEELFGVENLYSLENAILAHHLDQALKANYLFQKDVDYVVRDGEVIIVDEFTGRLSEGRRFSEGLHQALEAKEGVPIQEESQTLADITFQNYFRLYKKLAGMTGTAQTEATEFSEIYGLEVISIPTNRPVIRKDLDDLIFKTEKEKFDAVVKKIKELHQKGQPVLVGTTSIEKNELLHKLLKKEKIPHAVLNAKHHEKEAEIIAQAGRKGAVTVATNMAGRGVDIKIDDEVRELGGLFILGTERHESRRIDNQLRGRAGRQGDPGASQFFLSLEDNLLRIFGGDRIKNIMNRLGIEEGEHIESKMVTRAVEKAQKRVENMHFESRKHILEYDDVANEQRKTIYKFRQELLNPEYDIASKIRENRAEVVEELLSQSEIFPETPKDDFNLEKLSKVIQEELGTKIGVEEMKDKEYDELKNFLIERLEKEYEEKMGQLEEEQRREIERILYLQVLDNAWREHLYQMDILKTGIGLRGYNQKDPLVEYKKESFNLFMELVNRIKKEAIKTLHLIELRNEQEEEEIRRLEEELAKMEAQIAQEAVMQHGEEVKTEPVITKKKPARNEPCPCGSGKKYKHCCGKSGPKKGILAAANG.

ATP is bound by residues Q88, 106–110 (GEGKT), and D496. Positions 818-842 (EVKTEPVITKKKPARNEPCPCGSGK) are disordered. Zn(2+) contacts are provided by C836, C838, C847, and C848.

The protein belongs to the SecA family. In terms of assembly, monomer and homodimer. Part of the essential Sec protein translocation apparatus which comprises SecA, SecYEG and auxiliary proteins SecDF-YajC and YidC. The cofactor is Zn(2+).

Its subcellular location is the cell inner membrane. The protein resides in the cytoplasm. The enzyme catalyses ATP + H2O + cellular proteinSide 1 = ADP + phosphate + cellular proteinSide 2.. In terms of biological role, part of the Sec protein translocase complex. Interacts with the SecYEG preprotein conducting channel. Has a central role in coupling the hydrolysis of ATP to the transfer of proteins into and across the cell membrane, serving as an ATP-driven molecular motor driving the stepwise translocation of polypeptide chains across the membrane. The chain is Protein translocase subunit SecA from Nitratiruptor sp. (strain SB155-2).